A 368-amino-acid chain; its full sequence is MKLTVKTLKGSHFEIRVLPTDTIMAVKKNIEDSQSKDNYPCGQQLLIHNGKVLKDETTLVENKVTEEGFLVVMLSKSKTASSAGPSSTQPTSTTTSTISSTTLAAPSTTQSIAVPASNSTPVQEQPTAQSDTYGQAASTLVSGSSIEQMVQQIMEMGGGSWDKETVTRALRAAYNNPERAVDYLYSGIPETVTIPATNLSGVGSGRELTAPPPSGGPNSSPLDLFPQEAVSDAAGGDLGTLEFLRGNDQFQQLRSMVNSNPQILQPMLQELGKQNPQLLRLIQENQAEFLQLLNEPYEGSDGDVDIFDQPDQEMPHSVNVTPEEQESIERLEAMGFDRAIVIEAFLSCDRNEELAANYLLEHSADFED.

The 77-residue stretch at 1 to 77 (MKLTVKTLKG…GFLVVMLSKS (77 aa)) folds into the Ubiquitin-like domain. The span at 80–111 (ASSAGPSSTQPTSTTTSTISSTTLAAPSTTQS) shows a compositional bias: low complexity. Residues 80-136 (ASSAGPSSTQPTSTTTSTISSTTLAAPSTTQSIAVPASNSTPVQEQPTAQSDTYGQA) form a disordered region. Polar residues predominate over residues 116-136 (ASNSTPVQEQPTAQSDTYGQA). The UBA 1 domain maps to 142–185 (SGSSIEQMVQQIMEMGGGSWDKETVTRALRAAYNNPERAVDYLY). The segment at 202–222 (VGSGRELTAPPPSGGPNSSPL) is disordered. The 44-residue stretch at 239–282 (GTLEFLRGNDQFQQLRSMVNSNPQILQPMLQELGKQNPQLLRLI) folds into the STI1 domain. The UBA 2 domain occupies 320-360 (VTPEEQESIERLEAMGFDRAIVIEAFLSCDRNEELAANYLL).

The protein belongs to the RAD23 family. In terms of assembly, interacts with 'Lys-48'-linked polyubiquitin chains. Interacts with RPN10. In terms of tissue distribution, widely expressed in the whole plant.

It is found in the nucleus. It localises to the cytoplasm. Functionally, may be involved in nucleotide excision repair. Binds and presumably selects ubiquitin-conjugates for destruction. Prefers multiubiquitin chains rather than single ubiquitins, with a binding affinity for 'Lys-48'-linked ubiquitin chains. Acts as a ubiquitin receptor that associates with the 26S proteasomal docking subunit RPN10 for the indirect recognition of ubiquitinated substrates of ubiquitin/26S proteasome-mediated proteolysis (UPP). Involved in UV tolerance in roots, specifically in dark conditions. This is Probable ubiquitin receptor RAD23a from Arabidopsis thaliana (Mouse-ear cress).